We begin with the raw amino-acid sequence, 218 residues long: Thiopurine S-methyltransferase (218 aa).

S-adenosyl-L-methionine is bound by residues tryptophan 10, leucine 45, glutamate 66, and arginine 123.

This sequence belongs to the class I-like SAM-binding methyltransferase superfamily. TPMT family.

Its subcellular location is the cytoplasm. It catalyses the reaction S-adenosyl-L-methionine + a thiopurine = S-adenosyl-L-homocysteine + a thiopurine S-methylether.. This chain is Thiopurine S-methyltransferase, found in Shewanella oneidensis (strain ATCC 700550 / JCM 31522 / CIP 106686 / LMG 19005 / NCIMB 14063 / MR-1).